The primary structure comprises 217 residues: Small ribosomal subunit protein uS3 (217 aa).

The KH type-2 domain occupies 38 to 106 (IRKFLKKRLS…KVTLDIQEVR (69 aa)).

This sequence belongs to the universal ribosomal protein uS3 family. Part of the 30S ribosomal subunit. Forms a tight complex with proteins S10 and S14.

Its function is as follows. Binds the lower part of the 30S subunit head. Binds mRNA in the 70S ribosome, positioning it for translation. The polypeptide is Small ribosomal subunit protein uS3 (Desulfotalea psychrophila (strain LSv54 / DSM 12343)).